The chain runs to 571 residues: Proline--tRNA ligase (571 aa).

It belongs to the class-II aminoacyl-tRNA synthetase family. ProS type 1 subfamily. As to quaternary structure, homodimer.

The protein resides in the cytoplasm. The enzyme catalyses tRNA(Pro) + L-proline + ATP = L-prolyl-tRNA(Pro) + AMP + diphosphate. In terms of biological role, catalyzes the attachment of proline to tRNA(Pro) in a two-step reaction: proline is first activated by ATP to form Pro-AMP and then transferred to the acceptor end of tRNA(Pro). As ProRS can inadvertently accommodate and process non-cognate amino acids such as alanine and cysteine, to avoid such errors it has two additional distinct editing activities against alanine. One activity is designated as 'pretransfer' editing and involves the tRNA(Pro)-independent hydrolysis of activated Ala-AMP. The other activity is designated 'posttransfer' editing and involves deacylation of mischarged Ala-tRNA(Pro). The misacylated Cys-tRNA(Pro) is not edited by ProRS. This is Proline--tRNA ligase from Psychromonas ingrahamii (strain DSM 17664 / CCUG 51855 / 37).